The primary structure comprises 437 residues: Protein disulfide-isomerase tmx3a (437 aa).

The N-terminal stretch at 1 to 21 (MANMRNIILTALLSAIALVSG) is a signal peptide. The region spanning 22 to 126 (YVEGLDDKFT…IIEFTNRVSG (105 aa)) is the Thioredoxin domain. The Extracellular segment spans residues 22 to 368 (YVEGLDDKFT…KNTVMSMVET (347 aa)). Catalysis depends on nucleophile residues C48 and C51. The cysteines at positions 48 and 51 are disulfide-linked. N308 carries N-linked (GlcNAc...) asparagine glycosylation. A helical transmembrane segment spans residues 369–389 (APVFSCFVLGLPVGVVVLVIY). Residues 390–437 (ATCTAVPADDEKPEEEATASPALDTHGKKAIESQPESTEKTSEAKKED) lie on the Cytoplasmic side of the membrane. The disordered stretch occupies residues 398–437 (DDEKPEEEATASPALDTHGKKAIESQPESTEKTSEAKKED). The segment covering 414-437 (THGKKAIESQPESTEKTSEAKKED) has biased composition (basic and acidic residues). The short motif at 434–437 (KKED) is the Di-lysine motif element.

The protein resides in the endoplasmic reticulum membrane. It carries out the reaction Catalyzes the rearrangement of -S-S- bonds in proteins.. In terms of biological role, probable disulfide isomerase, which participates in the folding of proteins containing disulfide bonds. May act as a dithiol oxidase. Acts as a regulator of endoplasmic reticulum-mitochondria contact sites via its ability to regulate redox signals. This is Protein disulfide-isomerase tmx3a (tmx3a) from Danio rerio (Zebrafish).